Here is a 334-residue protein sequence, read N- to C-terminus: Ornithine carbamoyltransferase (334 aa).

Residues 56–59 (STRT), Q83, R107, and 134–137 (HPTQ) each bind carbamoyl phosphate. L-ornithine is bound by residues N168, D232, and 236-237 (SM). Carbamoyl phosphate is bound by residues 274 to 275 (CL) and R320.

The protein belongs to the aspartate/ornithine carbamoyltransferase superfamily. OTCase family. In terms of assembly, homotrimer.

It localises to the cytoplasm. It catalyses the reaction carbamoyl phosphate + L-ornithine = L-citrulline + phosphate + H(+). The protein operates within amino-acid biosynthesis; L-arginine biosynthesis; L-arginine from L-ornithine and carbamoyl phosphate: step 1/3. Reversibly catalyzes the transfer of the carbamoyl group from carbamoyl phosphate (CP) to the N(epsilon) atom of ornithine (ORN) to produce L-citrulline. In Salmonella typhimurium (strain LT2 / SGSC1412 / ATCC 700720), this protein is Ornithine carbamoyltransferase (argI).